The primary structure comprises 442 residues: Adenylosuccinate synthetase (442 aa).

Residues 25–31 (GDEGKGK), 53–55 (GHT), and lysine 62 contribute to the GTP site. Aspartate 26 acts as the Proton acceptor in catalysis. Mg(2+)-binding residues include aspartate 26 and glycine 53. Residues 26 to 29 (DEGK) and 51 to 54 (NAGH) each bind IMP. Histidine 54 acts as the Proton donor in catalysis. Residues threonine 141, arginine 155, asparagine 232, and threonine 247 each coordinate IMP. Threonine 307 lines the GTP pocket. A substrate-binding site is contributed by 307–313 (TTTKRPR). Arginine 311 provides a ligand contact to IMP. Residues arginine 313, 339 to 341 (KLD), and 425 to 427 (GVG) each bind GTP.

This sequence belongs to the adenylosuccinate synthetase family. As to quaternary structure, homodimer. The cofactor is Mg(2+).

Its subcellular location is the cytoplasm. The catalysed reaction is IMP + L-aspartate + GTP = N(6)-(1,2-dicarboxyethyl)-AMP + GDP + phosphate + 2 H(+). The protein operates within purine metabolism; AMP biosynthesis via de novo pathway; AMP from IMP: step 1/2. Plays an important role in the salvage pathway for purine nucleotide biosynthesis. Catalyzes the first committed step in the biosynthesis of AMP from IMP. This Plasmodium falciparum (isolate 3D7) protein is Adenylosuccinate synthetase (Adss).